The sequence spans 244 residues: Carboxy-S-adenosyl-L-methionine synthase (244 aa).

S-adenosyl-L-methionine is bound by residues Tyr38, 63–65, 88–89, 116–117, Asn131, and Arg198; these read GCS, DN, and DI.

The protein belongs to the class I-like SAM-binding methyltransferase superfamily. Cx-SAM synthase family. Homodimer.

It carries out the reaction prephenate + S-adenosyl-L-methionine = carboxy-S-adenosyl-L-methionine + 3-phenylpyruvate + H2O. In terms of biological role, catalyzes the conversion of S-adenosyl-L-methionine (SAM) to carboxy-S-adenosyl-L-methionine (Cx-SAM). The sequence is that of Carboxy-S-adenosyl-L-methionine synthase from Haemophilus ducreyi (strain 35000HP / ATCC 700724).